Consider the following 117-residue polypeptide: Thioredoxin (117 aa).

Residues 2–116 (AISLTEEDFV…FENIIKDFFG (115 aa)) form the Thioredoxin domain. Cys40 and Cys43 are disulfide-bonded.

This sequence belongs to the thioredoxin family.

Participates in various redox reactions through the reversible oxidation of its active center dithiol to a disulfide and catalyzes dithiol-disulfide exchange reactions. In Borreliella burgdorferi (strain ATCC 35210 / DSM 4680 / CIP 102532 / B31) (Borrelia burgdorferi), this protein is Thioredoxin (trxA).